The primary structure comprises 1217 residues: Splicing factor 3B subunit 3 (1217 aa).

Interaction with PHF5A, SF3B1 and SF3B5 regions lie at residues glutamate 105–glutamine 119 and asparagine 145–tyrosine 168. Serine 156 is modified (phosphoserine). Interaction with SF3B1 and SF3B5 regions lie at residues aspartate 193–histidine 231 and arginine 786–histidine 804. The segment at threonine 1028–lysine 1049 is interaction with SF3B1. The segment at threonine 1100–serine 1123 is interaction with SF3B5. Threonine 1200 carries the post-translational modification Phosphothreonine.

Belongs to the RSE1 family. Component of the 17S U2 SnRNP complex, a ribonucleoprotein complex that contains small nuclear RNA (snRNA) U2 and a number of specific proteins. Part of the SF3B subcomplex of the 17S U2 SnRNP complex. SF3B associates with the splicing subcomplex SF3A and a 12S RNA unit to form the U2 small nuclear ribonucleoproteins complex (U2 snRNP). Within the SF3B subcomplex, interacts directly with SF3B1 (via HEAT domain), SF3B5 and PHF5A. Identified in the spliceosome A complex; remains associated with the spliceosome throughout the splicing process. Component of the spliceosome B complex. Identified in the spliceosome C complex. Identified in the spliceosome E complex. Component of the minor (U12-type spliceosome) spliceosome. Within this complex, interacts with SCNM1. Associates with the STAGA transcription coactivator-HAT complex. Interacts with SUPT3H. Interacts with TAF3.

Its subcellular location is the nucleus. Component of the 17S U2 SnRNP complex of the spliceosome, a large ribonucleoprotein complex that removes introns from transcribed pre-mRNAs. The 17S U2 SnRNP complex (1) directly participates in early spliceosome assembly and (2) mediates recognition of the intron branch site during pre-mRNA splicing by promoting the selection of the pre-mRNA branch-site adenosine, the nucleophile for the first step of splicing. Within the 17S U2 SnRNP complex, SF3B3 is part of the SF3B subcomplex, which is required for 'A' complex assembly formed by the stable binding of U2 snRNP to the branchpoint sequence in pre-mRNA. Sequence independent binding of SF3A and SF3B subcomplexes upstream of the branch site is essential, it may anchor U2 snRNP to the pre-mRNA. May also be involved in the assembly of the 'E' complex. Also acts as a component of the minor spliceosome, which is involved in the splicing of U12-type introns in pre-mRNAs. The protein is Splicing factor 3B subunit 3 (Sf3b3) of Mus musculus (Mouse).